The chain runs to 394 residues: MESLLLIAYAFLYLFLLSHEAEYKINADQSENSNVGRFGGNYGRLGRLSGSIHHWTGEYRGLEKRPNHSEDNPPSRGWTGEPGLDPRGEGPYVGVTDGRILKWSGEDLGWIEFAYSSPHRKNCSSHKVEPACGRPLGLSFEKKSGDLYFCDGYLGVMKVGPKGGLAEKVVDEVEGQKVMFANQMDIDEEEDAIYFNDSSDTYHFGDVFYAFLCGEKTGRAIRYDKKTKEAKVIMDRLHFPNGLALSIDGSFVLSCEVPTQLVHRYWAKGPNAGTRDIFAKLPGYADNIRRTETGDFWVALHSKKTPFSRLSMIHPWVGKFFIKTLKMELLVFLFEGGKPHAVAVKLSGKTGEIMEILEDSEGKNMKFISEVQERDGRLWFGSVFLPSVWVLDRQ.

The first 21 residues, M1–A21, serve as a signal peptide directing secretion. Over residues G61–P73 the composition is skewed to basic and acidic residues. Residues G61 to Y92 form a disordered region. N-linked (GlcNAc...) asparagine glycosylation is found at N67, N122, and N196.

It belongs to the strictosidine synthase family.

The protein resides in the vacuole. In Arabidopsis thaliana (Mouse-ear cress), this protein is Protein STRICTOSIDINE SYNTHASE-LIKE 1.